Here is a 346-residue protein sequence, read N- to C-terminus: Putative glycosyltransferase HI_0523 (346 aa).

It belongs to the glycosyltransferase 9 family.

This Haemophilus influenzae (strain ATCC 51907 / DSM 11121 / KW20 / Rd) protein is Putative glycosyltransferase HI_0523.